Here is a 108-residue protein sequence, read N- to C-terminus: Synaptobrevin-1 (108 aa).

The interval 1-25 is disordered; that stretch reads MDAQGDAGAQGGSQGPRPSNKRLQQ. The Cytoplasmic segment spans residues 1-85; the sequence is MDAQGDAGAQ…KRKYWWKNIK (85 aa). One can recognise a v-SNARE coiled-coil homology domain in the interval 22-82; that stretch reads RLQQTQAQVD…ATLKRKYWWK (61 aa). The chain crosses the membrane as a helical; Anchor for type IV membrane protein span at residues 86–106; it reads MMIIMCAIVVILIIIIVLWAG. Over 107 to 108 the chain is Extracellular; the sequence is GK.

The protein belongs to the synaptobrevin family. In terms of assembly, part of the SNARE core complex containing CBG09569/SNAP25, snb-1/VAMP2 and CBG03570/STX1A. This complex binds to cpx-1/CPLX1.

The protein localises to the cytoplasmic vesicle. The protein resides in the secretory vesicle. It is found in the synaptic vesicle membrane. Its subcellular location is the cell membrane. It localises to the synapse. The protein localises to the synaptosome. Its function is as follows. Involved in the targeting and/or fusion of transport vesicles to their target membrane. Acts in neuronal exocytosis of synaptic transmission. Likely to have a role in cholinergic transmisson. Required for viability, coordinated movement and M3 pharynx motor neuron function. The chain is Synaptobrevin-1 from Caenorhabditis briggsae.